The following is a 423-amino-acid chain: Phospholipase A1-IIalpha (423 aa).

Residues 194–217 adopt a coiled-coil conformation; it reads SAQEQVQGELKRLLELYKDEEISI. The active-site Acyl-ester intermediate is the Ser-223. Catalysis depends on charge relay system residues Ser-223, Asp-290, and His-327. A disordered region spans residues 399–423; the sequence is HDDDVDADDNDDSSTSNQLQELNTD. Positions 401–410 are enriched in acidic residues; it reads DDVDADDNDD. Positions 411 to 423 are enriched in polar residues; sequence SSTSNQLQELNTD.

Belongs to the AB hydrolase superfamily. Lipase family.

It localises to the cytoplasm. In terms of biological role, acylhydrolase that catalyzes the hydrolysis of phospholipids at the sn-1 position. The sequence is that of Phospholipase A1-IIalpha from Arabidopsis thaliana (Mouse-ear cress).